A 205-amino-acid chain; its full sequence is Holliday junction branch migration complex subunit RuvA (205 aa).

A domain I region spans residues 1–64 (MIGKLRGIVD…DEAIRLIGFT (64 aa)). The segment at 65-143 (TDSEREWFRL…DSMGLSAALE (79 aa)) is domain II. Residues 144 to 152 (VGVNGEAVS) are flexible linker. Residues 153–205 (SVSAPARDAVSALVNLGYPQAQAMGAVAAAAKRLDDAASTEQLIRHGLKELAR) form a domain III region.

Belongs to the RuvA family. Homotetramer. Forms an RuvA(8)-RuvB(12)-Holliday junction (HJ) complex. HJ DNA is sandwiched between 2 RuvA tetramers; dsDNA enters through RuvA and exits via RuvB. An RuvB hexamer assembles on each DNA strand where it exits the tetramer. Each RuvB hexamer is contacted by two RuvA subunits (via domain III) on 2 adjacent RuvB subunits; this complex drives branch migration. In the full resolvosome a probable DNA-RuvA(4)-RuvB(12)-RuvC(2) complex forms which resolves the HJ.

Its subcellular location is the cytoplasm. The RuvA-RuvB-RuvC complex processes Holliday junction (HJ) DNA during genetic recombination and DNA repair, while the RuvA-RuvB complex plays an important role in the rescue of blocked DNA replication forks via replication fork reversal (RFR). RuvA specifically binds to HJ cruciform DNA, conferring on it an open structure. The RuvB hexamer acts as an ATP-dependent pump, pulling dsDNA into and through the RuvAB complex. HJ branch migration allows RuvC to scan DNA until it finds its consensus sequence, where it cleaves and resolves the cruciform DNA. The chain is Holliday junction branch migration complex subunit RuvA from Parvibaculum lavamentivorans (strain DS-1 / DSM 13023 / NCIMB 13966).